The chain runs to 734 residues: Polyribonucleotide nucleotidyltransferase (734 aa).

Residues D503 and D509 each contribute to the Mg(2+) site. In terms of domain architecture, KH spans 570-629; sequence PKLSTIQVPVDAIGMIIGKGGETIRSITEETGAQINVDDDGTVTISSPNGESAAAAIETI. The S1 motif domain maps to 639-713; the sequence is GTIYMGKVKD…GKIRYALSIK (75 aa).

This sequence belongs to the polyribonucleotide nucleotidyltransferase family. Requires Mg(2+) as cofactor.

The protein localises to the cytoplasm. It catalyses the reaction RNA(n+1) + phosphate = RNA(n) + a ribonucleoside 5'-diphosphate. Involved in mRNA degradation. Catalyzes the phosphorolysis of single-stranded polyribonucleotides processively in the 3'- to 5'-direction. This is Polyribonucleotide nucleotidyltransferase from Chlorobium phaeobacteroides (strain BS1).